The following is a 340-amino-acid chain: Undecaprenyl-phosphate 4-deoxy-4-formamido-L-arabinose transferase (340 aa).

Transmembrane regions (helical) follow at residues 235-255 and 269-289; these read LSIV…ALIF and LFVL…GMGL.

It belongs to the glycosyltransferase 2 family.

Its subcellular location is the cell inner membrane. It carries out the reaction UDP-4-deoxy-4-formamido-beta-L-arabinose + di-trans,octa-cis-undecaprenyl phosphate = 4-deoxy-4-formamido-alpha-L-arabinopyranosyl di-trans,octa-cis-undecaprenyl phosphate + UDP. It functions in the pathway glycolipid biosynthesis; 4-amino-4-deoxy-alpha-L-arabinose undecaprenyl phosphate biosynthesis; 4-amino-4-deoxy-alpha-L-arabinose undecaprenyl phosphate from UDP-4-deoxy-4-formamido-beta-L-arabinose and undecaprenyl phosphate: step 1/2. The protein operates within bacterial outer membrane biogenesis; lipopolysaccharide biosynthesis. In terms of biological role, catalyzes the transfer of 4-deoxy-4-formamido-L-arabinose from UDP to undecaprenyl phosphate. The modified arabinose is attached to lipid A and is required for resistance to polymyxin and cationic antimicrobial peptides. This Pseudomonas fluorescens (strain Pf0-1) protein is Undecaprenyl-phosphate 4-deoxy-4-formamido-L-arabinose transferase.